A 450-amino-acid chain; its full sequence is tRNA-2-methylthio-N(6)-dimethylallyladenosine synthase (450 aa).

The MTTase N-terminal domain maps to Arg-8–Ala-124. [4Fe-4S] cluster contacts are provided by Cys-17, Cys-52, Cys-87, Cys-162, Cys-166, and Cys-169. In terms of domain architecture, Radical SAM core spans Ala-148–Ala-380. The region spanning Arg-383–Gln-445 is the TRAM domain.

This sequence belongs to the methylthiotransferase family. MiaB subfamily. In terms of assembly, monomer. [4Fe-4S] cluster is required as a cofactor.

Its subcellular location is the cytoplasm. It carries out the reaction N(6)-dimethylallyladenosine(37) in tRNA + (sulfur carrier)-SH + AH2 + 2 S-adenosyl-L-methionine = 2-methylsulfanyl-N(6)-dimethylallyladenosine(37) in tRNA + (sulfur carrier)-H + 5'-deoxyadenosine + L-methionine + A + S-adenosyl-L-homocysteine + 2 H(+). Its function is as follows. Catalyzes the methylthiolation of N6-(dimethylallyl)adenosine (i(6)A), leading to the formation of 2-methylthio-N6-(dimethylallyl)adenosine (ms(2)i(6)A) at position 37 in tRNAs that read codons beginning with uridine. This Acidiphilium cryptum (strain JF-5) protein is tRNA-2-methylthio-N(6)-dimethylallyladenosine synthase.